Reading from the N-terminus, the 937-residue chain is Protein Niban 1 (937 aa).

G2 carries the N-myristoyl glycine lipid modification. S578, S581, S595, S601, and S646 each carry phosphoserine. Over residues 584–595 the composition is skewed to polar residues; that stretch reads DLKTSMGSNQAS. Disordered stretches follow at residues 584 to 710 and 724 to 891; these read DLKT…GSLR and SAPE…LGGN. Positions 640–651 are enriched in low complexity; the sequence is ASISGSSPPSGE. A compositionally biased stretch (polar residues) spans 655-681; it reads VSVSGVDNSAGNPLSADNSAGPLSSHL. A compositionally biased stretch (basic and acidic residues) spans 688–701; the sequence is EPPKDEETAHKRPE. A phosphoserine mark is found at S708 and S768. Polar residues-rich tracts occupy residues 802 to 817 and 855 to 869; these read PTSQ…NTSC and VTVT…SSNP.

The protein belongs to the Niban family. As to expression, detected in brain, lung, spleen and skeletal muscle. Expressed in small renal tumors but not in normal kidney.

The protein resides in the cytoplasm. Its subcellular location is the membrane. In terms of biological role, regulates phosphorylation of a number of proteins involved in translation regulation including EIF2A, EIF4EBP1 and RPS6KB1. May be involved in the endoplasmic reticulum stress response. The polypeptide is Protein Niban 1 (Rattus norvegicus (Rat)).